The chain runs to 1116 residues: DUB-associated factor 1 (1116 aa).

WD repeat units lie at residues 21-62 (AHIL…NEPE), 91-132 (KNSD…DHDD), 160-200 (VHDG…EKMA), 219-262 (SMSP…EVIR), 266-305 (AHRT…DQTT), 387-426 (KKYG…FSVN), and 428-466 (GGFA…LLNT). The disordered stretch occupies residues 578 to 600 (LDTGYNSESKKNNKDKKRKSTFK). S668 carries the post-translational modification Phosphoserine. T693 is modified (phosphothreonine). Polar residues predominate over residues 747–776 (ISSQDLPSNNTHNKLRSSENSRANSTSTLE). Disordered regions lie at residues 747–784 (ISSQ…KKPE) and 963–994 (FISA…PSTQ). Low complexity predominate over residues 967 to 987 (SDTTESSGNDSSDSSLGNGNE).

As to quaternary structure, interacts (via its WD repeats) with ubiquitin.

It localises to the cytoplasm. Functionally, ubiquitin-binding protein involved in the resistance to phenanthroline, sanguinarine, nordihydroguaiaretic acid (NDGA), isopropyl (N-3-chloro-phenyl)-carbamate (IPCPC) and guanosine 5'-O-(2-thiodiphosphate). The sequence is that of DUB-associated factor 1 from Saccharomyces cerevisiae (strain ATCC 204508 / S288c) (Baker's yeast).